Consider the following 89-residue polypeptide: MAQSAVVKNEIIEKFKTHEGDTGSSEVQIALLTDRIQYLTDHFKTHKKDHHSRQGLLKLVGQRRSLLDYLKKKNVTTYRELIKALGIRK.

The protein belongs to the universal ribosomal protein uS15 family. In terms of assembly, part of the 30S ribosomal subunit. Forms a bridge to the 50S subunit in the 70S ribosome, contacting the 23S rRNA.

In terms of biological role, one of the primary rRNA binding proteins, it binds directly to 16S rRNA where it helps nucleate assembly of the platform of the 30S subunit by binding and bridging several RNA helices of the 16S rRNA. Its function is as follows. Forms an intersubunit bridge (bridge B4) with the 23S rRNA of the 50S subunit in the ribosome. The polypeptide is Small ribosomal subunit protein uS15 (Desulfotalea psychrophila (strain LSv54 / DSM 12343)).